Consider the following 399-residue polypeptide: Elongation factor Tu (399 aa).

In terms of domain architecture, tr-type G spans 10–204; that stretch reads KPHVNIGTIG…AVDTSIPEPE (195 aa). The tract at residues 19–26 is G1; that stretch reads GHVDHGKT. A GTP-binding site is contributed by 19–26; the sequence is GHVDHGKT. Position 26 (threonine 26) interacts with Mg(2+). The interval 60–64 is G2; it reads GITIN. The segment at 81–84 is G3; the sequence is DCPG. GTP-binding positions include 81-85 and 136-139; these read DCPGH and NKCD. Residues 136 to 139 form a G4 region; sequence NKCD. Residues 174-176 are G5; the sequence is SGL.

It belongs to the TRAFAC class translation factor GTPase superfamily. Classic translation factor GTPase family. EF-Tu/EF-1A subfamily. Monomer.

It is found in the cytoplasm. It catalyses the reaction GTP + H2O = GDP + phosphate + H(+). GTP hydrolase that promotes the GTP-dependent binding of aminoacyl-tRNA to the A-site of ribosomes during protein biosynthesis. This chain is Elongation factor Tu, found in Prochlorococcus marinus (strain MIT 9303).